The chain runs to 552 residues: Membrane protein insertase YidC (552 aa).

A helical membrane pass occupies residues 3 to 23 (IKRTVLWVIFFMSAVMLFDNW). The segment at 36-59 (SATPTRTVGSAAPGTTTPGTQPAD) is disordered. The span at 42–59 (TVGSAAPGTTTPGTQPAD) shows a compositional bias: low complexity. The next 3 helical transmembrane spans lie at 364-384 (WGWS…PLSA), 430-450 (FGGC…YWVL), and 504-524 (MMFM…GLVL).

The protein belongs to the OXA1/ALB3/YidC family. Type 1 subfamily. Interacts with the Sec translocase complex via SecD. Specifically interacts with transmembrane segments of nascent integral membrane proteins during membrane integration.

The protein localises to the cell inner membrane. In terms of biological role, required for the insertion and/or proper folding and/or complex formation of integral membrane proteins into the membrane. Involved in integration of membrane proteins that insert both dependently and independently of the Sec translocase complex, as well as at least some lipoproteins. Aids folding of multispanning membrane proteins. The polypeptide is Membrane protein insertase YidC (Paraburkholderia xenovorans (strain LB400)).